The following is a 371-amino-acid chain: Carbamoyl phosphate synthase small chain (371 aa).

The CPSase stretch occupies residues 1-182 (MGVHKKGYLV…KNPIVHTPKN (182 aa)). The L-glutamine site is built by Ser49, Gly235, and Gly237. Positions 186–371 (RVVVLDLGVK…EFVKILEGRK (186 aa)) constitute a Glutamine amidotransferase type-1 domain. The active-site Nucleophile is the Cys263. Leu264, Gln267, Asn305, Gly307, and Tyr308 together coordinate L-glutamine. Residues His346 and Glu348 contribute to the active site.

The protein belongs to the CarA family. In terms of assembly, composed of two chains; the small (or glutamine) chain promotes the hydrolysis of glutamine to ammonia, which is used by the large (or ammonia) chain to synthesize carbamoyl phosphate. Tetramer of heterodimers (alpha,beta)4.

It carries out the reaction hydrogencarbonate + L-glutamine + 2 ATP + H2O = carbamoyl phosphate + L-glutamate + 2 ADP + phosphate + 2 H(+). The enzyme catalyses L-glutamine + H2O = L-glutamate + NH4(+). The protein operates within amino-acid biosynthesis; L-arginine biosynthesis; carbamoyl phosphate from bicarbonate: step 1/1. It functions in the pathway pyrimidine metabolism; UMP biosynthesis via de novo pathway; (S)-dihydroorotate from bicarbonate: step 1/3. Its function is as follows. Small subunit of the glutamine-dependent carbamoyl phosphate synthetase (CPSase). CPSase catalyzes the formation of carbamoyl phosphate from the ammonia moiety of glutamine, carbonate, and phosphate donated by ATP, constituting the first step of 2 biosynthetic pathways, one leading to arginine and/or urea and the other to pyrimidine nucleotides. The small subunit (glutamine amidotransferase) binds and cleaves glutamine to supply the large subunit with the substrate ammonia. This is Carbamoyl phosphate synthase small chain from Pyrococcus furiosus (strain ATCC 43587 / DSM 3638 / JCM 8422 / Vc1).